Here is a 229-residue protein sequence, read N- to C-terminus: Flagellar L-ring protein (229 aa).

Positions Met1 to Gly20 are cleaved as a signal peptide. A lipid anchor (N-palmitoyl cysteine) is attached at Cys21. The S-diacylglycerol cysteine moiety is linked to residue Cys21.

It belongs to the FlgH family. The basal body constitutes a major portion of the flagellar organelle and consists of four rings (L,P,S, and M) mounted on a central rod.

The protein localises to the cell outer membrane. The protein resides in the bacterial flagellum basal body. Functionally, assembles around the rod to form the L-ring and probably protects the motor/basal body from shearing forces during rotation. The chain is Flagellar L-ring protein from Bordetella pertussis (strain Tohama I / ATCC BAA-589 / NCTC 13251).